Consider the following 139-residue polypeptide: Small ribosomal subunit protein uS12 (139 aa).

The tract at residues 1 to 55 (MPTINQLIRKGRKAKVKKSDSPALNKGYNSFKKVQTDLSSPQKRGVCTRVGTMTP) is disordered. The span at 32–42 (KKVQTDLSSPQ) shows a compositional bias: polar residues.

It belongs to the universal ribosomal protein uS12 family. Part of the 30S ribosomal subunit. Contacts proteins S8 and S17. May interact with IF1 in the 30S initiation complex.

Its function is as follows. With S4 and S5 plays an important role in translational accuracy. Functionally, interacts with and stabilizes bases of the 16S rRNA that are involved in tRNA selection in the A site and with the mRNA backbone. Located at the interface of the 30S and 50S subunits, it traverses the body of the 30S subunit contacting proteins on the other side and probably holding the rRNA structure together. The combined cluster of proteins S8, S12 and S17 appears to hold together the shoulder and platform of the 30S subunit. The chain is Small ribosomal subunit protein uS12 from Halalkalibacterium halodurans (strain ATCC BAA-125 / DSM 18197 / FERM 7344 / JCM 9153 / C-125) (Bacillus halodurans).